The sequence spans 287 residues: Ribonuclease Z (287 aa).

Residues His64, His66, Asp68, His69, His124, Asp191, and His250 each coordinate Zn(2+). Asp68 (proton acceptor) is an active-site residue.

It belongs to the RNase Z family. In terms of assembly, homodimer. Zn(2+) serves as cofactor.

The enzyme catalyses Endonucleolytic cleavage of RNA, removing extra 3' nucleotides from tRNA precursor, generating 3' termini of tRNAs. A 3'-hydroxy group is left at the tRNA terminus and a 5'-phosphoryl group is left at the trailer molecule.. Its function is as follows. Zinc phosphodiesterase, which displays some tRNA 3'-processing endonuclease activity. Probably involved in tRNA maturation, by removing a 3'-trailer from precursor tRNA. This chain is Ribonuclease Z, found in Pyrobaculum islandicum (strain DSM 4184 / JCM 9189 / GEO3).